The chain runs to 292 residues: F-box/LRR-repeat protein 15 (292 aa).

In terms of domain architecture, F-box spans 12–59; sequence LLDLPWEDVLVPHILSYLPLRHILSLQRVSKPFHSLVHIYLCNCRHFD. LRR repeat units lie at residues 134–155, 160–181, 186–207, 212–233, and 238–259; these read HLQN…RSLA, CLEA…SYLV, RLKS…EETA, DLEH…RTLA, and NLKS…GNLR.

It belongs to the FBXL15 family. As to quaternary structure, part of the SCF (SKP1-CUL1-F-box) E3 ubiquitin-protein ligase complex SCF(FBXL15).

The protein localises to the cytoplasm. Its pathway is protein modification; protein ubiquitination. Substrate recognition component of a SCF (SKP1-CUL1-F-box protein) E3 ubiquitin-protein ligase complex which mediates the ubiquitination and subsequent proteasomal degradation of target proteins. Acts as a positive regulator of the BMP signaling pathway. Required for dorsal/ventral pattern formation. In Xenopus laevis (African clawed frog), this protein is F-box/LRR-repeat protein 15 (fbxl15).